The primary structure comprises 996 residues: Poly [ADP-ribose] polymerase (996 aa).

A DNA-binding region spans residues 1–369 (MEIDLPFKVE…TSTILKNISL (369 aa)). 2 consecutive PARP-type zinc fingers follow at residues 7-89 (FKVE…DNCT) and 114-203 (FGIE…PVIK). 8 residues coordinate Zn(2+): C19, C22, H51, C54, C126, C129, H161, and C164. Short sequence motifs (nuclear localization signal) lie at residues 211–214 (KKAK) and 232–235 (KIKK). The region spanning 220–358 (EEDAASIKEL…EVRAIRYIPP (139 aa)) is the PADR1 zinc-binding domain. Residues 286 to 329 (GALLPCTDCKGRQLLFHKSGYLCNGDLTEWTKCTKLLKEPERKS) form a zinc ribbon region. 4 residues coordinate Zn(2+): C291, C294, C308, and C318. An automodification domain region spans residues 370–507 (KKGDELDGPK…SIYTKSVPKS (138 aa)). The BRCT domain occupies 382 to 473 (RERPPLYNIE…AGAINYISSM (92 aa)). Positions 527-625 (VAHVYVSRNK…ENFVKVAGRM (99 aa)) constitute a WGR domain. In terms of domain architecture, PARP alpha-helical spans 647–764 (KSKLPLSVQD…EIECAYSLLQ (118 aa)). Residues 773-996 (NPIDKHYEQL…YMLRMNFKYK (224 aa)) form the PARP catalytic domain.

It belongs to the ARTD/PARP family.

It localises to the nucleus. The enzyme catalyses NAD(+) + (ADP-D-ribosyl)n-acceptor = nicotinamide + (ADP-D-ribosyl)n+1-acceptor + H(+).. The catalysed reaction is L-aspartyl-[protein] + NAD(+) = 4-O-(ADP-D-ribosyl)-L-aspartyl-[protein] + nicotinamide. It catalyses the reaction L-glutamyl-[protein] + NAD(+) = 5-O-(ADP-D-ribosyl)-L-glutamyl-[protein] + nicotinamide. Poly-ADP-ribosyltransferase that mediates poly-ADP-ribosylation of proteins and plays a key role in DNA repair. Mainly mediates glutamate and aspartate ADP-ribosylation of target proteins: the ADP-D-ribosyl group of NAD(+) is transferred to the acceptor carboxyl group of glutamate and aspartate residues and further ADP-ribosyl groups are transferred to the 2'-position of the terminal adenosine moiety, building up a polymer with an average chain length of 20-30 units. The sequence is that of Poly [ADP-ribose] polymerase from Sarcophaga peregrina (Flesh fly).